The following is a 191-amino-acid chain: Cell division protein SepF (191 aa).

Residues 150–191 (TSSSPEEASPSSVSPKNTPQYSVENNTAPEPAWGNSKLSAFS) are disordered. A compositionally biased stretch (low complexity) spans 151-164 (SSSPEEASPSSVSP). Residues 165 to 177 (KNTPQYSVENNTA) are compositionally biased toward polar residues.

It belongs to the SepF family. Homodimer. Interacts with FtsZ.

It localises to the cytoplasm. Its function is as follows. Cell division protein that is part of the divisome complex and is recruited early to the Z-ring. Probably stimulates Z-ring formation, perhaps through the cross-linking of FtsZ protofilaments. Its function overlaps with FtsA. The chain is Cell division protein SepF from Prochlorococcus marinus (strain MIT 9312).